A 157-amino-acid polypeptide reads, in one-letter code: SsrA-binding protein (157 aa).

The protein belongs to the SmpB family.

The protein resides in the cytoplasm. Functionally, required for rescue of stalled ribosomes mediated by trans-translation. Binds to transfer-messenger RNA (tmRNA), required for stable association of tmRNA with ribosomes. tmRNA and SmpB together mimic tRNA shape, replacing the anticodon stem-loop with SmpB. tmRNA is encoded by the ssrA gene; the 2 termini fold to resemble tRNA(Ala) and it encodes a 'tag peptide', a short internal open reading frame. During trans-translation Ala-aminoacylated tmRNA acts like a tRNA, entering the A-site of stalled ribosomes, displacing the stalled mRNA. The ribosome then switches to translate the ORF on the tmRNA; the nascent peptide is terminated with the 'tag peptide' encoded by the tmRNA and targeted for degradation. The ribosome is freed to recommence translation, which seems to be the essential function of trans-translation. The polypeptide is SsrA-binding protein (Chlorobium phaeovibrioides (strain DSM 265 / 1930) (Prosthecochloris vibrioformis (strain DSM 265))).